Reading from the N-terminus, the 57-residue chain is Small polypeptide DEVIL 20 (57 aa).

N5 is a glycosylation site (N-linked (GlcNAc...) asparagine). The tract at residues 16-47 is required for DVL/RTFL small polypeptide activity; it reads TFKAKCSHMVRKQRAKFYILGRCLAMLVCGRG. A helical transmembrane segment spans residues 29 to 45; the sequence is RAKFYILGRCLAMLVCG.

The protein belongs to the DVL/RTFL small polypeptides family.

Its subcellular location is the cell membrane. Its function is as follows. Small polypeptide acting as a regulatory molecule which coordinates cellular responses required for differentiation, growth and development, probably by restricting polar cell proliferation in lateral organs and coordinating socket cell recruitment and differentiation at trichome sites. This Arabidopsis thaliana (Mouse-ear cress) protein is Small polypeptide DEVIL 20.